Consider the following 602-residue polypeptide: MSSMRTHYCGLVTEQLSGQEVALTGWVQRRRDHGGVIFIDLRDREGLVQVVCDPDRPEMFKAAEEIRNEYCIRITGKVRPRPAGTENTNLTSGKIEVLCYELTVLNPSVTPPFQLDDDNLSETTRLTHRVLDLRRPQMQYNLRLRYKVAMEVRKYLDAQGFIDIETPMLGKSTPEGARDYLVPSRVNPGHFFALPQSPQIFKQMLMVSGFDRYYQITKCFRDEDLRADRQPEFTQIDCETSFLTEQEIRDLFEDMMRTVFKNAIDVDLDAKFPVMEFREAMARFGSDKPDLRVKLEFTELTDVMKDVDFKVFSGPANSDNGRVVGLRVPGGGAISRGEIDAYTQFVGIYGAKGLAWVKVNEVAKGRDGLQSPIVKNLHDAAITEILKRTGAQDGDIIFFGADKAKVVNDAIGALRLKIGHSEFGKASGLFEDVWKPLWVVDFPMFEYDEEDARWVAMHHPFTSPKDEHMQYLETDPGKCIAKAYDMVLNGWEMGGGSVRIYRSDIQSKVFRALKINDEEARAKFGYLLDALQYGAPPHGGLAFGLDRIVTMMAGADSIRDVIAFPKTQRAQDLLTQAPSAVDEKQLRELHIRLRATEPKTTV.

Glutamate 175 contributes to the L-aspartate binding site. An aspartate region spans residues glutamine 199–lysine 202. Arginine 221 is an L-aspartate binding site. ATP is bound by residues arginine 221–glutamate 223 and glutamine 230. Histidine 458 provides a ligand contact to L-aspartate. Glutamate 492 is an ATP binding site. Arginine 499 lines the L-aspartate pocket. Residue glycine 544–arginine 547 coordinates ATP.

Belongs to the class-II aminoacyl-tRNA synthetase family. Type 1 subfamily. Homodimer.

Its subcellular location is the cytoplasm. The enzyme catalyses tRNA(Asx) + L-aspartate + ATP = L-aspartyl-tRNA(Asx) + AMP + diphosphate. Its function is as follows. Aspartyl-tRNA synthetase with relaxed tRNA specificity since it is able to aspartylate not only its cognate tRNA(Asp) but also tRNA(Asn). Reaction proceeds in two steps: L-aspartate is first activated by ATP to form Asp-AMP and then transferred to the acceptor end of tRNA(Asp/Asn). The protein is Aspartate--tRNA(Asp/Asn) ligase of Cupriavidus pinatubonensis (strain JMP 134 / LMG 1197) (Cupriavidus necator (strain JMP 134)).